The primary structure comprises 127 residues: Fluoride-specific ion channel FluC (127 aa).

Helical transmembrane passes span 37–57, 68–88, and 102–122; these read TSFVNIAGSLAMGLLAGWLAL, LFLATGVLGGFTTFSAFSLEV, and LYAGVSVLLGVSALFIGLWMA. Residues glycine 76 and threonine 79 each coordinate Na(+).

The protein belongs to the fluoride channel Fluc/FEX (TC 1.A.43) family.

The protein resides in the cell inner membrane. The catalysed reaction is fluoride(in) = fluoride(out). With respect to regulation, na(+) is not transported, but it plays an essential structural role and its presence is essential for fluoride channel function. Functionally, fluoride-specific ion channel. Important for reducing fluoride concentration in the cell, thus reducing its toxicity. This chain is Fluoride-specific ion channel FluC, found in Hyphomonas neptunium (strain ATCC 15444).